The primary structure comprises 281 residues: MTNYDQHHALQSLTLGKPTPYRERYDPSLLQAVPRALNRDLLGLQATALPFHGADIWTLYELSWLNDAGIPQVAIGEIALNATSTNLIESKSFKLYLNSLNQTSFPSREAVRVRLAEDLSRCADGEVQVVLRALSDFTSSPLLDFDGECIDDQPIHIDDYTFTNRYLEGAAGGSVVSETLVSHLLKSNCLITHQPDWGSVQIRYRGARIDREALLRYLVSFRQHNEFHEQCVERIFCDVMQFCRPETLTVYARYTRRGGLDINPWRSNTHFSPATGRLARQ.

Isoleucine 88 to serine 90 provides a ligand contact to substrate. Serine 90–lysine 91 serves as a coordination point for NADPH. Catalysis depends on cysteine 189, which acts as the Thioimide intermediate. Aspartate 196 functions as the Proton donor in the catalytic mechanism. Residue histidine 228–glutamate 229 coordinates substrate. Arginine 257–glycine 258 serves as a coordination point for NADPH.

Belongs to the GTP cyclohydrolase I family. QueF type 2 subfamily. Homodimer.

The protein localises to the cytoplasm. It catalyses the reaction 7-aminomethyl-7-carbaguanine + 2 NADP(+) = 7-cyano-7-deazaguanine + 2 NADPH + 3 H(+). The protein operates within tRNA modification; tRNA-queuosine biosynthesis. In terms of biological role, catalyzes the NADPH-dependent reduction of 7-cyano-7-deazaguanine (preQ0) to 7-aminomethyl-7-deazaguanine (preQ1). The chain is NADPH-dependent 7-cyano-7-deazaguanine reductase from Sodalis glossinidius (strain morsitans).